The following is a 601-amino-acid chain: Uptake hydrogenase large subunit (601 aa).

Residues cysteine 74, cysteine 77, cysteine 580, and cysteine 583 each contribute to the Ni(2+) site.

The protein belongs to the [NiFe]/[NiFeSe] hydrogenase large subunit family. Heterodimer of a large and a small subunit. Requires Ni(2+) as cofactor.

The protein resides in the cell membrane. It catalyses the reaction H2 + A = AH2. Its function is as follows. This enzyme recycles the H(2) produced by nitrogenase to increase the production of ATP and to protect nitrogenase against inhibition or damage by O(2) under carbon- or phosphate-limited conditions. This chain is Uptake hydrogenase large subunit (hupL), found in Azotobacter chroococcum mcd 1.